The sequence spans 328 residues: MGQLIDGVWHDTWYDTKSTGGKFQRSASAFRNWLTADGAPGPTGTGGFIAEKDRYHLYVSLACPWAHRTLIMRKLKGLEPFISVSVVNPLMLENGWTFDDSFPGATGDTLYQNEFLYQLYLHADPHYSGRVTVPVLWDKKNHTIVSNESAEIIRMFNTAFDALGAKAGDYYPPALQTKIDELNGWIYDTVNNGVYKAGFATSQEAYDEAVAKVFESLARLEQILGQHRYLTGNQLTEADIRLWTTLVRFDPVYVTHFKCDKHRISDYLNLYGFLRDIYQMPGIAETVNFDHIRNHYFRSHKTINPTGIISIGPWQDLDEPHGRDVRFG.

Cys63 serves as the catalytic Nucleophile. Glutathione contacts are provided by residues Trp96, 130 to 133, and 148 to 149; these read RVTV and ES. A GST C-terminal domain is found at 172 to 296; it reads PPALQTKIDE…VNFDHIRNHY (125 aa). Tyr195 (proton donor/acceptor) is an active-site residue. Positions 203 to 311 are dimerization; that stretch reads QEAYDEAVAK…TINPTGIISI (109 aa).

It belongs to the GST superfamily. Xi-class GSH transferase family. As to quaternary structure, homodimer.

The catalysed reaction is 2-(glutathione-S-yl)-hydroquinone + glutathione = hydroquinone + glutathione disulfide. Its function is as follows. Catalyzes glutathione (GSH)-dependent reduction of glutathionyl-hydroquinones (GS-HQs) to the corresponding hydroquinones. Can use a variety of GS-HQs as substrates, such as GS-p-hydroquinone (GS-HQ), GS-hydroxy-p-hydroquinone (GS-HHQ), GS-methyl-p-hydroquinone (GS-MHQ), GS-menadiol, and GS-trichloro-p-hydroquinone (GS-TriCH). Also displays GSH-dependent disulfide-bond reduction activity toward HED (2-hydroxyethyl disulfide), and is able to catalyze DMA (dimethylarsinate) reduction. Exhibits no GSH transferase activity with 1-chloro-2,4-dinitrobenzene (CDNB). The sequence is that of Glutathionyl-hydroquinone reductase YqjG (yqjG) from Escherichia coli (strain K12).